The chain runs to 418 residues: Thermolabile hemolysin (418 aa).

The signal sequence occupies residues 1–19; it reads MMKKTITLLTALLPLASAV. The active-site Nucleophile is Ser153. Active-site residues include Asp390 and His393.

Belongs to the 'GDSL' lipolytic enzyme family. In terms of processing, there are two forms of LDH. The LDH(S) may be a protein in which 13 residues of the N-terminal of LDH(L) are deleted.

The protein resides in the secreted. Functionally, phospholipase hydrolyzing both fatty acid esters of phospholipid, i.e. it hydrolyzes phosphatidylcholine (PC) to lysophosphatidylcholine (LPC) and then LPC to glycerophosphorylcholine (GPC). This is Thermolabile hemolysin from Vibrio parahaemolyticus serotype O3:K6 (strain RIMD 2210633).